The chain runs to 248 residues: Short-chain dehydrogenase/reductase iacG (248 aa).

NADP(+)-binding residues include Ile14, Asn35, Lys41, Asp58, Arg120, and Val187.

Belongs to the short-chain dehydrogenases/reductases (SDR) family.

It functions in the pathway secondary metabolite biosynthesis. Short-chain dehydrogenase/reductase; part of the gene cluster that mediates the biosynthesis of iso-A82775C, a enylepoxycyclohexane and biosynthetic precursor of the chloropestolide anticancer natural products. Within the cluster, the prenyltransferase iacE prenylates siccayne to generate pestalodiol E, using dimethylallyl diphosphate (DMAPP) as cosubstrate. The probable oxidoreductase iacF is then involved in the epoxidation of pestalodiol F to pestalodiol F, which is further converted to pestalofone A by the short-chain dehydrogenase/reductase iacG. Iso-A82775C is subsequently generated from pestalofone A by the short-chain dehydrogenase/reductase iacC. Iso-A82775C is further condensed with maldoxin via a Diels-Alder reaction to produce the anticancer natural products chloropestolides A to E. The protein is Short-chain dehydrogenase/reductase iacG of Pestalotiopsis fici (strain W106-1 / CGMCC3.15140).